The sequence spans 498 residues: uncharacterized protein (498 aa).

The next 11 helical transmembrane spans lie at 54-74 (LLKMDLVISPIIGFLYLMAFL), 100-120 (VAVSIFYVLYILVETPSVVLV), 128-148 (MLAFISFAWSMTVLFSGFMSS), 150-170 (GGLIATRLILGLLEGCLFPAL), 188-208 (SYLFASAGLAGAFGGLFAYAL), 221-241 (WIYIVEGLVSFIGVPLCLFAL), 302-322 (VLYGFSSFLPVIIKGLGFVGL), 326-346 (YMTIPVYIAGVISFLFVAWLS), 353-373 (AVYLISASTVVAVGYIIMLAS), 381-401 (TATYIIAIGCYIGPGLNLGWL), and 446-466 (AFTLGCVIVGGLAYVVMFFSL).

The protein belongs to the major facilitator superfamily. Allantoate permease family.

It localises to the membrane. This is an uncharacterized protein from Schizosaccharomyces pombe (strain 972 / ATCC 24843) (Fission yeast).